The following is a 287-amino-acid chain: Inorganic pyrophosphatase (287 aa).

Arg79 contacts diphosphate. Residues Asp116, Asp121, and Asp153 each contribute to the Mg(2+) site.

This sequence belongs to the PPase family. The cofactor is Mg(2+).

Its subcellular location is the cytoplasm. It carries out the reaction diphosphate + H2O = 2 phosphate + H(+). This is Inorganic pyrophosphatase (IPP1) from Eremothecium gossypii (strain ATCC 10895 / CBS 109.51 / FGSC 9923 / NRRL Y-1056) (Yeast).